Consider the following 367-residue polypeptide: Alanine racemase (367 aa).

K40 serves as the catalytic Proton acceptor; specific for D-alanine. An N6-(pyridoxal phosphate)lysine modification is found at K40. R136 is a binding site for substrate. Y263 functions as the Proton acceptor; specific for L-alanine in the catalytic mechanism. Position 310 (M310) interacts with substrate.

It belongs to the alanine racemase family. It depends on pyridoxal 5'-phosphate as a cofactor.

The catalysed reaction is L-alanine = D-alanine. It functions in the pathway amino-acid biosynthesis; D-alanine biosynthesis; D-alanine from L-alanine: step 1/1. Catalyzes the interconversion of L-alanine and D-alanine. May also act on other amino acids. In Streptococcus pneumoniae (strain Hungary19A-6), this protein is Alanine racemase (alr).